A 208-amino-acid polypeptide reads, in one-letter code: Uracil phosphoribosyltransferase (208 aa).

5-phospho-alpha-D-ribose 1-diphosphate-binding positions include Arg-78, Arg-103, and Asp-130 to Ser-138. Uracil-binding positions include Ile-193 and Gly-198–Ala-200. Residue Asp-199 participates in 5-phospho-alpha-D-ribose 1-diphosphate binding.

It belongs to the UPRTase family. Requires Mg(2+) as cofactor.

It carries out the reaction UMP + diphosphate = 5-phospho-alpha-D-ribose 1-diphosphate + uracil. It functions in the pathway pyrimidine metabolism; UMP biosynthesis via salvage pathway; UMP from uracil: step 1/1. With respect to regulation, allosterically activated by GTP. Functionally, catalyzes the conversion of uracil and 5-phospho-alpha-D-ribose 1-diphosphate (PRPP) to UMP and diphosphate. The chain is Uracil phosphoribosyltransferase from Brucella ovis (strain ATCC 25840 / 63/290 / NCTC 10512).